A 558-amino-acid polypeptide reads, in one-letter code: Rhamnogalacturonase B (558 aa).

The first 21 residues, 1-21 (MLLDKLSVLSFLGLAPIFAAA), serve as a signal peptide directing secretion. Residues Cys42 and Cys68 are joined by a disulfide bond. A glycan (N-linked (GlcNAc...) asparagine) is linked at Asn145. Residue Asp219 is the Proton donor of the active site. Cys221 and Cys238 form a disulfide bridge. 2 N-linked (GlcNAc...) asparagine glycosylation sites follow: Asn239 and Asn254. The active site involves His294. N-linked (GlcNAc...) asparagine glycosylation is present at Asn321. Disulfide bonds link Cys344–Cys350 and Cys372–Cys381. Over residues 503-526 (VGAQEGSTTSAPSFAAPSGAGNSP) the composition is skewed to low complexity. The tract at residues 503–558 (VGAQEGSTTSAPSFAAPSGAGNSPQGPTGASGFGEKGQQGEQGEQGEQGEQGVCYV) is disordered.

It belongs to the glycosyl hydrolase 28 family.

It localises to the secreted. It catalyses the reaction Endohydrolysis of alpha-D-GalA-(1-&gt;2)-alpha-L-Rha glycosidic bond in the rhamnogalacturonan I backbone with initial inversion of anomeric configuration releasing oligosaccharides with beta-D-GalA at the reducing end.. Its function is as follows. Pectinolytic enzymes consist of four classes of enzymes: pectine lyase, polygalacturonase, pectin methylesterase and rhamnogalacturonase. Hydrolyzes alpha-D-galacturonopyranosyl-(1,2)-alpha-L-rhamnopyranosyl linkages in the backbone of the hairy regions of pectins. The chain is Rhamnogalacturonase B (rhgB) from Aspergillus niger.